The chain runs to 1068 residues: Protein AF-10 (1068 aa).

Residues 22–74 (IGGCCVCSDERGWAENPLVYCDGHGCSVAVHQACYGIVQVPTGPWFCRKCESQ) form a PHD-type 1 zinc finger. The segment at 79–112 (RVRCELCPHKDGALKRTDNGGWAHVVCALYIPEV) adopts a C2HC pre-PHD-type zinc-finger fold. Positions 80–287 (VRCELCPHKD…SLKRLEDTTA (208 aa)) are self-association. The interval 106–190 (ALYIPEVQFA…EGNGADNVQY (85 aa)) is required for interaction with histone H3. The PHD-type 2 zinc finger occupies 135 to 198 (KTCYICDEQG…QYCGYCKYHF (64 aa)). The tract at residues 141–233 (DEQGRESKAA…QDKHHEKEKK (93 aa)) is interaction with FSTL3. Positions 206 to 260 (RGSNRSYDQSLSDSSSHSQDKHHEKEKKKYKEKDKHKQKHKKQPEPSPALVPSLT) are disordered. Over residues 211-222 (SYDQSLSDSSSH) the composition is skewed to low complexity. Ser217 is modified (phosphoserine). The segment covering 223-240 (SQDKHHEKEKKKYKEKDK) has biased composition (basic and acidic residues). A Phosphoserine modification is found at Ser252. Lys280 is covalently cross-linked (Glycyl lysine isopeptide (Lys-Gly) (interchain with G-Cter in SUMO2)). Polar residues predominate over residues 291 to 305 (NANFQEVSAHTSSGK). A disordered region spans residues 291 to 505 (NANFQEVSAH…SSASPTSSVA (215 aa)). Residues 306-317 (DVSETRGSEGKG) are compositionally biased toward basic and acidic residues. Residues 311–674 (RGSEGKGKKS…QDLGDNSRNL (364 aa)) are DNA-binding. Positions 352-372 (SFSGTPGSVKSSSGSSVQSPQ) are enriched in low complexity. Polar residues-rich tracts occupy residues 387–396 (YSHSQQSSAT) and 404–446 (SGSQ…SSLP). Residue Ser436 is modified to Phosphoserine. Positions 465 to 483 (EKKRKGNKQSKHGPGRPKG) are enriched in basic residues. Over residues 490–505 (VSHLSVSSASPTSSVA) the composition is skewed to low complexity. Ser532 is subject to Phosphoserine. Residues 583-594 (SGSGSSTPVSSS) show a composition bias toward low complexity. Disordered stretches follow at residues 583-612 (SGSGSSTPVSSSHLPQQSSGHLQQVGALSP) and 660-708 (NNQT…SLEN). Composition is skewed to polar residues over residues 595–604 (HLPQQSSGHL) and 660–673 (NNQTDQDLGDNSRN). Positions 674–694 (LVGRGSSPRGSLSPRSPVSSL) are enriched in low complexity. Ser684, Ser686, and Ser689 each carry phosphoserine. The interval 703 to 784 (NSSLENLPPV…NAQLSVPFPT (82 aa)) is transactivation domain; required for DOT1L-binding. Residues 750–778 (LQVENRRLEEQIKNLTAKKERLQLLNAQL) form a leucine-zipper region. A compositionally biased stretch (polar residues) spans 800–814 (AQTAPTTDSLNSSKS). The interval 800–865 (AQTAPTTDSL…SPAQQGSGVS (66 aa)) is disordered. Low complexity-rich tracts occupy residues 834 to 848 (LTSSGQSTSSSSALS) and 855 to 865 (QSPAQQGSGVS).

Self-associates. Interacts with FSTL3 isoform 2; the interaction enhances MLLT10 in vitro transcriptional activity and self-association. Interacts with YEATS4. Interacts with SS18. Interacts with DOT1L; this interaction also occurs with the KMT2A/MLL1 fusion protein. Interacts with histone H3; interaction is necessary for MLLT10 binding to nucleosomes; interaction is inhibited by histone H3 'Lys-27' methylations (H3K27me1, H3K27me2 and H3K27me3) amd acetylation; interaction stabilizes association of MLLT10 at chromatin; interaction is essential for histone H3 'Lys-79' dimethylation (H3K79me2). As to expression, expressed abundantly in testis.

Its subcellular location is the nucleus. In terms of biological role, probably involved in transcriptional regulation. In vitro or as fusion protein with KMT2A/MLL1 has transactivation activity. Binds to cruciform DNA. In cells, binding to unmodified histone H3 regulates DOT1L functions including histone H3 'Lys-79' dimethylation (H3K79me2) and gene activation. This Homo sapiens (Human) protein is Protein AF-10.